Here is a 261-residue protein sequence, read N- to C-terminus: RING finger and CHY zinc finger domain-containing protein 1 (261 aa).

A CHY-type zinc finger spans residues 13–80; that stretch reads QERGQRGCEH…AQQTCEECST (68 aa). Zn(2+) is bound by residues Cys20, His22, Cys33, Cys34, Cys40, Cys43, His44, His50, Cys62, Cys65, Cys75, Cys78, Cys87, Cys90, His101, Cys102, Cys105, Cys108, His118, Cys119, Cys122, Cys125, His134, and Cys136. The CTCHY-type zinc finger occupies 82 to 144; the sequence is FGEYYCDICH…KCIENVSRQN (63 aa). An RING-type zinc finger spans residues 145–189; that stretch reads CPICLEDIHTSRVVAHVLPCGHLLHRTCYEEMLKEGYRCPLCMHS. The residue at position 257 (Ser257) is a Phosphoserine.

In terms of assembly, monomer and homodimer. Interacts with AR, MDM2, KAT5, PLAG1, PLAGL2, COPE, UBE2D2 and GORAB/NTKLBP1. Post-translationally, subject to ubiquitination and proteasomal degradation. Interaction with PLAGL2 or KAT5 enhances protein stability.

It is found in the nucleus. The protein resides in the nucleus speckle. The protein localises to the cytoplasm. It catalyses the reaction S-ubiquitinyl-[E2 ubiquitin-conjugating enzyme]-L-cysteine + [acceptor protein]-L-lysine = [E2 ubiquitin-conjugating enzyme]-L-cysteine + N(6)-ubiquitinyl-[acceptor protein]-L-lysine.. It functions in the pathway protein modification; protein ubiquitination. In terms of biological role, E3 ubiquitin-protein ligase that mediates ubiquitination of target proteins, including p53/TP53, TP73, HDAC1 and CDKN1B. Mediates ubiquitination and degradation of p53/TP53; preferentially acts on tetrameric p53/TP53. Catalyzes monoubiquitinates the translesion DNA polymerase POLH. Involved in the ribosome-associated quality control (RQC) pathway, which mediates the extraction of incompletely synthesized nascent chains from stalled ribosomes: RCHY1 acts downstream of NEMF and recognizes CAT tails associated with stalled nascent chains, leading to their ubiquitination and degradation. Functionally, has no E3 ubiquitin-protein ligase activity. The protein is RING finger and CHY zinc finger domain-containing protein 1 (RCHY1) of Homo sapiens (Human).